An 822-amino-acid chain; its full sequence is Phenylalanine--tRNA ligase beta subunit (822 aa).

The region spanning 44–162 is the tRNA-binding domain; the sequence is LSKNTNLVVG…DQIALGSNAL (119 aa). Residues 201–224 are disordered; it reads QSSNNNQETKSTNYKTKNSEDQTN. The B5 domain occupies 430-513; that stretch reads RTNPTISLNL…RLYGCHKLPP (84 aa). Mg(2+)-binding residues include aspartate 491, aspartate 497, and aspartate 501. The FDX-ACB domain occupies 730–822; it reads PKFPTVIRDL…LIKHFHIEIR (93 aa).

This sequence belongs to the phenylalanyl-tRNA synthetase beta subunit family. Type 1 subfamily. Tetramer of two alpha and two beta subunits. Mg(2+) is required as a cofactor.

Its subcellular location is the cytoplasm. It carries out the reaction tRNA(Phe) + L-phenylalanine + ATP = L-phenylalanyl-tRNA(Phe) + AMP + diphosphate + H(+). In Onion yellows phytoplasma (strain OY-M), this protein is Phenylalanine--tRNA ligase beta subunit.